We begin with the raw amino-acid sequence, 266 residues long: Putative carbamate hydrolase RutD (266 aa).

This sequence belongs to the AB hydrolase superfamily. Hydrolase RutD family.

It carries out the reaction carbamate + 2 H(+) = NH4(+) + CO2. Its function is as follows. Involved in pyrimidine catabolism. May facilitate the hydrolysis of carbamate, a reaction that can also occur spontaneously. This is Putative carbamate hydrolase RutD from Escherichia coli (strain B / BL21-DE3).